The primary structure comprises 115 residues: Large ribosomal subunit protein bL19 (115 aa).

The protein belongs to the bacterial ribosomal protein bL19 family.

Functionally, this protein is located at the 30S-50S ribosomal subunit interface and may play a role in the structure and function of the aminoacyl-tRNA binding site. The chain is Large ribosomal subunit protein bL19 from Fervidobacterium nodosum (strain ATCC 35602 / DSM 5306 / Rt17-B1).